The following is a 219-amino-acid chain: Deoxyribose-phosphate aldolase 1 (219 aa).

Asp87 serves as the catalytic Proton donor/acceptor. The active-site Schiff-base intermediate with acetaldehyde is Lys149. Lys178 functions as the Proton donor/acceptor in the catalytic mechanism.

This sequence belongs to the DeoC/FbaB aldolase family. DeoC type 1 subfamily.

It is found in the cytoplasm. The catalysed reaction is 2-deoxy-D-ribose 5-phosphate = D-glyceraldehyde 3-phosphate + acetaldehyde. The protein operates within carbohydrate degradation; 2-deoxy-D-ribose 1-phosphate degradation; D-glyceraldehyde 3-phosphate and acetaldehyde from 2-deoxy-alpha-D-ribose 1-phosphate: step 2/2. In terms of biological role, catalyzes a reversible aldol reaction between acetaldehyde and D-glyceraldehyde 3-phosphate to generate 2-deoxy-D-ribose 5-phosphate. The polypeptide is Deoxyribose-phosphate aldolase 1 (Vibrio vulnificus (strain YJ016)).